Reading from the N-terminus, the 623-residue chain is V-type proton ATPase catalytic subunit A (623 aa).

Glycine 252–threonine 259 is a binding site for ATP.

The protein belongs to the ATPase alpha/beta chains family. V-ATPase is a heteromultimeric enzyme composed of a peripheral catalytic V1 complex (components A to H) attached to an integral membrane V0 proton pore complex (components: a, c, c'', d and e). Binds to the deubiquitinating enzyme AMSH3.

The protein resides in the vacuole membrane. It carries out the reaction ATP + H2O + 4 H(+)(in) = ADP + phosphate + 5 H(+)(out). Catalytic subunit of the peripheral V1 complex of vacuolar ATPase. V-ATPase vacuolar ATPase is responsible for acidifying a variety of intracellular compartments in eukaryotic cells. This is V-type proton ATPase catalytic subunit A (VHA-A) from Arabidopsis thaliana (Mouse-ear cress).